A 480-amino-acid polypeptide reads, in one-letter code: Adenosylmethionine-8-amino-7-oxononanoate aminotransferase (480 aa).

126–127 contributes to the pyridoxal 5'-phosphate binding site; it reads GS. Substrate is bound at residue tyrosine 160. Aspartate 270 provides a ligand contact to pyridoxal 5'-phosphate. The residue at position 314 (lysine 314) is an N6-(pyridoxal phosphate)lysine. Glycine 350 lines the substrate pocket. Residue 351 to 352 participates in pyridoxal 5'-phosphate binding; sequence PT. Residue arginine 441 coordinates substrate.

It belongs to the class-III pyridoxal-phosphate-dependent aminotransferase family. BioA subfamily. It depends on pyridoxal 5'-phosphate as a cofactor.

It catalyses the reaction (8S)-8-amino-7-oxononanoate + S-adenosyl-L-methionine = S-adenosyl-4-methylsulfanyl-2-oxobutanoate + (7R,8S)-7,8-diammoniononanoate. Its pathway is cofactor biosynthesis; biotin biosynthesis; 7,8-diaminononanoate from 8-amino-7-oxononanoate (SAM route): step 1/1. Functionally, catalyzes the transfer of the alpha-amino group from S-adenosyl-L-methionine (SAM) to 7-keto-8-aminopelargonic acid (KAPA) to form 7,8-diaminopelargonic acid (DAPA). It is the only aminotransferase known to utilize SAM as an amino donor. The chain is Adenosylmethionine-8-amino-7-oxononanoate aminotransferase from Saccharomyces cerevisiae (strain ATCC 204508 / S288c) (Baker's yeast).